A 208-amino-acid polypeptide reads, in one-letter code: Large ribosomal subunit protein uL3 (208 aa).

At glutamine 150 the chain carries N5-methylglutamine.

It belongs to the universal ribosomal protein uL3 family. As to quaternary structure, part of the 50S ribosomal subunit. Forms a cluster with proteins L14 and L19. Post-translationally, methylated by PrmB.

Functionally, one of the primary rRNA binding proteins, it binds directly near the 3'-end of the 23S rRNA, where it nucleates assembly of the 50S subunit. In Buchnera aphidicola subsp. Cinara cedri (strain Cc), this protein is Large ribosomal subunit protein uL3.